The sequence spans 190 residues: Female-specific histamine-binding protein 2 (190 aa).

The first 19 residues, 1–19 (MKLLILSLALVLALSQVKG), serve as a signal peptide directing secretion. Residues Ser39, Asp43, Tyr55, Asp58, Trp61, Glu101, Phe117, Tyr119, Phe127, Asp139, Glu154, and Trp156 each contribute to the histamine site. 2 cysteine pairs are disulfide-bonded: Cys67/Cys188 and Cys138/Cys167.

This sequence belongs to the calycin superfamily. Histamine-binding salivary protein family. In terms of assembly, monomer. In terms of tissue distribution, expressed in salivary glands.

The protein resides in the secreted. Salivary tick protein that acts by scavenging histamine at the wound site, outcompeting histamine receptors for histamine, thereby overcoming host inflammatory responses. Binds histamine with a high-affinity (Kd=1.7 nM). Contains two binding histamine sites (H and L), that appear to bind histamine with differing affinities (high and low). This is Female-specific histamine-binding protein 2 from Rhipicephalus appendiculatus (Brown ear tick).